We begin with the raw amino-acid sequence, 158 residues long: 2-C-methyl-D-erythritol 2,4-cyclodiphosphate synthase (158 aa).

A divalent metal cation-binding residues include aspartate 9 and histidine 11. Residues 9-11 (DVH) and 35-36 (HS) contribute to the 4-CDP-2-C-methyl-D-erythritol 2-phosphate site. Histidine 43 is a binding site for a divalent metal cation. 4-CDP-2-C-methyl-D-erythritol 2-phosphate contacts are provided by residues 57–59 (DIG), 62–66 (FPDTD), 101–107 (AQKPKMA), 133–136 (TTTE), phenylalanine 140, and arginine 143.

Belongs to the IspF family. Homotrimer. It depends on a divalent metal cation as a cofactor.

The enzyme catalyses 4-CDP-2-C-methyl-D-erythritol 2-phosphate = 2-C-methyl-D-erythritol 2,4-cyclic diphosphate + CMP. Its pathway is isoprenoid biosynthesis; isopentenyl diphosphate biosynthesis via DXP pathway; isopentenyl diphosphate from 1-deoxy-D-xylulose 5-phosphate: step 4/6. Functionally, involved in the biosynthesis of isopentenyl diphosphate (IPP) and dimethylallyl diphosphate (DMAPP), two major building blocks of isoprenoid compounds. Catalyzes the conversion of 4-diphosphocytidyl-2-C-methyl-D-erythritol 2-phosphate (CDP-ME2P) to 2-C-methyl-D-erythritol 2,4-cyclodiphosphate (ME-CPP) with a corresponding release of cytidine 5-monophosphate (CMP). This chain is 2-C-methyl-D-erythritol 2,4-cyclodiphosphate synthase, found in Bacillus pumilus (strain SAFR-032).